The chain runs to 551 residues: Chitinase (551 aa).

An N-terminal signal peptide occupies residues 1–17 (MLYKLLNVLWLVAVSNA). The interval 1–149 (MLYKLLNVLW…NKPGRREDKI (149 aa)) is chitin binding domain (CBD). In terms of domain architecture, GH18 spans 148 to 548 (KIVAAYFVEW…NAINAQFKPK (401 aa)). Residue Asn173 is glycosylated (N-linked (GlcNAc...) asparagine; by host). The active-site Proton donor is Glu305. N-linked (GlcNAc...) asparagine; by host glycosylation is present at Asn444. Positions 548–551 (KDEL) match the Prevents secretion from ER motif.

It belongs to the glycosyl hydrolase 18 family. Chitinase class II subfamily. Interacts with host VCATH.

The protein resides in the host endoplasmic reticulum lumen. The enzyme catalyses Random endo-hydrolysis of N-acetyl-beta-D-glucosaminide (1-&gt;4)-beta-linkages in chitin and chitodextrins.. Plays a role in host liquefaction to facilitate horizontal transmission of the virus by hydrolyzing beta-chitin and by regulating the cysteine protease VCATH. Localized in the host reticulum endoplasmic via its KDEL motif, interacts with and thus prevents VCATH secretion before host cell lysis occurs. This is Chitinase (CHIA) from Lepidoptera (butterflies and moths).